The chain runs to 327 residues: Phenylalanine--tRNA ligase alpha subunit (327 aa).

A Mg(2+)-binding site is contributed by Glu252.

It belongs to the class-II aminoacyl-tRNA synthetase family. Phe-tRNA synthetase alpha subunit type 1 subfamily. In terms of assembly, tetramer of two alpha and two beta subunits. Requires Mg(2+) as cofactor.

Its subcellular location is the cytoplasm. The enzyme catalyses tRNA(Phe) + L-phenylalanine + ATP = L-phenylalanyl-tRNA(Phe) + AMP + diphosphate + H(+). This Serratia proteamaculans (strain 568) protein is Phenylalanine--tRNA ligase alpha subunit.